A 310-amino-acid chain; its full sequence is Aspartate carbamoyltransferase catalytic subunit (310 aa).

Residues Arg59 and Thr60 each coordinate carbamoyl phosphate. Lys87 contributes to the L-aspartate binding site. 3 residues coordinate carbamoyl phosphate: Arg109, His137, and Gln140. L-aspartate contacts are provided by Arg170 and Arg225. Residues Gly266 and Pro267 each coordinate carbamoyl phosphate.

The protein belongs to the aspartate/ornithine carbamoyltransferase superfamily. ATCase family. Heterododecamer (2C3:3R2) of six catalytic PyrB chains organized as two trimers (C3), and six regulatory PyrI chains organized as three dimers (R2).

It carries out the reaction carbamoyl phosphate + L-aspartate = N-carbamoyl-L-aspartate + phosphate + H(+). It functions in the pathway pyrimidine metabolism; UMP biosynthesis via de novo pathway; (S)-dihydroorotate from bicarbonate: step 2/3. Catalyzes the condensation of carbamoyl phosphate and aspartate to form carbamoyl aspartate and inorganic phosphate, the committed step in the de novo pyrimidine nucleotide biosynthesis pathway. This is Aspartate carbamoyltransferase catalytic subunit from Pelobacter propionicus (strain DSM 2379 / NBRC 103807 / OttBd1).